Here is a 78-residue protein sequence, read N- to C-terminus: Small ribosomal subunit protein bS18B (78 aa).

The tract at residues 1–22 is disordered; the sequence is MPRKPVRKVASTPRPNPLDQNG.

It belongs to the bacterial ribosomal protein bS18 family. In terms of assembly, part of the 30S ribosomal subunit. Forms a tight heterodimer with protein bS6.

Functionally, binds as a heterodimer with protein bS6 to the central domain of the 16S rRNA, where it helps stabilize the platform of the 30S subunit. The chain is Small ribosomal subunit protein bS18B from Streptomyces avermitilis (strain ATCC 31267 / DSM 46492 / JCM 5070 / NBRC 14893 / NCIMB 12804 / NRRL 8165 / MA-4680).